The following is a 206-amino-acid chain: Small ribosomal subunit protein uS4 (206 aa).

Residues 96-156 form the S4 RNA-binding domain; sequence GRLDNVVYRM…EKSKKQARIK (61 aa).

The protein belongs to the universal ribosomal protein uS4 family. In terms of assembly, part of the 30S ribosomal subunit. Contacts protein S5. The interaction surface between S4 and S5 is involved in control of translational fidelity.

In terms of biological role, one of the primary rRNA binding proteins, it binds directly to 16S rRNA where it nucleates assembly of the body of the 30S subunit. Functionally, with S5 and S12 plays an important role in translational accuracy. This Actinobacillus succinogenes (strain ATCC 55618 / DSM 22257 / CCUG 43843 / 130Z) protein is Small ribosomal subunit protein uS4.